We begin with the raw amino-acid sequence, 194 residues long: MRQAEIKRKTQETDIELAVNLDQQEPVAIETGVGFFDHMLTLFARHSRISLTVKAEGDLWVDSHHTVEDVGIVLGLALRQALGDKAGINRYGTSFVPMDETLGMASLDLSGRSYLVFEADFDNPKLGNFDTELVEEFFQALAFNLQMNLHLKILHGKNSHHKAESLFKATGRALREAITINPEIHGVNSTKGLL.

It belongs to the imidazoleglycerol-phosphate dehydratase family.

It is found in the cytoplasm. It catalyses the reaction D-erythro-1-(imidazol-4-yl)glycerol 3-phosphate = 3-(imidazol-4-yl)-2-oxopropyl phosphate + H2O. Its pathway is amino-acid biosynthesis; L-histidine biosynthesis; L-histidine from 5-phospho-alpha-D-ribose 1-diphosphate: step 6/9. The polypeptide is Imidazoleglycerol-phosphate dehydratase (Streptococcus gordonii (strain Challis / ATCC 35105 / BCRC 15272 / CH1 / DL1 / V288)).